The sequence spans 606 residues: Membrane protein insertase YidC (606 aa).

Residues 8–28 (LILATALSFIVILVWFVLFPP) form a helical membrane-spanning segment. Positions 33–59 (MPLTGETSTELTPDAATGSLPSVTSDT) are disordered. 6 consecutive transmembrane segments (helical) span residues 116–136 (IVTM…YGWA), 348–368 (FIDS…FFLL), 374–394 (FIGN…AILL), 448–468 (LPIL…FVTI), 506–526 (SIMA…SMWL), and 542–562 (IFAW…SGLV).

It belongs to the OXA1/ALB3/YidC family. Type 1 subfamily. Interacts with the Sec translocase complex via SecD. Specifically interacts with transmembrane segments of nascent integral membrane proteins during membrane integration.

The protein resides in the cell inner membrane. Functionally, required for the insertion and/or proper folding and/or complex formation of integral membrane proteins into the membrane. Involved in integration of membrane proteins that insert both dependently and independently of the Sec translocase complex, as well as at least some lipoproteins. Aids folding of multispanning membrane proteins. The protein is Membrane protein insertase YidC of Roseobacter denitrificans (strain ATCC 33942 / OCh 114) (Erythrobacter sp. (strain OCh 114)).